We begin with the raw amino-acid sequence, 246 residues long: O-antigen export system ATP-binding protein RfbB (246 aa).

One can recognise an ABC transporter domain in the interval Ser22 to Ala246. Gly63–Ser70 is an ATP binding site.

Belongs to the ABC transporter superfamily.

It is found in the cell inner membrane. May form an ATP-driven O-antigen export apparatus, in association with RfbA. The chain is O-antigen export system ATP-binding protein RfbB (rfbB) from Klebsiella pneumoniae.